We begin with the raw amino-acid sequence, 772 residues long: Cadherin-19 (772 aa).

The N-terminal stretch at Met1 to Gly21 is a signal peptide. A propeptide spanning residues Ala22 to Arg43 is cleaved from the precursor. Cadherin domains lie at Gly44–Phe148, Leu149–Phe256, Lys257–Phe370, Leu371–Phe470, and Phe470–Thr581. The Extracellular segment spans residues Gly44–Glu596. Residues Asn57 and Asn74 are each glycosylated (N-linked (GlcNAc...) asparagine). N-linked (GlcNAc...) asparagine glycosylation is found at Asn419, Asn437, Asn508, Asn515, Asn516, and Asn534. The chain crosses the membrane as a helical span at residues Val597–Gly617. Topologically, residues Leu618–Asn772 are cytoplasmic.

In terms of tissue distribution, expressed in many tissues, with the exception of uterus.

It localises to the cell membrane. Cadherins are calcium-dependent cell adhesion proteins. They preferentially interact with themselves in a homophilic manner in connecting cells; cadherins may thus contribute to the sorting of heterogeneous cell types. This Homo sapiens (Human) protein is Cadherin-19 (CDH19).